The following is a 552-amino-acid chain: Hydroxylamine reductase (552 aa).

Residues cysteine 3, cysteine 6, cysteine 18, and cysteine 25 each coordinate [2Fe-2S] cluster. Residues histidine 250, glutamate 274, cysteine 318, cysteine 406, cysteine 434, cysteine 459, glutamate 493, and lysine 495 each coordinate hybrid [4Fe-2O-2S] cluster. The residue at position 406 (cysteine 406) is a Cysteine persulfide.

The protein belongs to the HCP family. The cofactor is [2Fe-2S] cluster. It depends on hybrid [4Fe-2O-2S] cluster as a cofactor.

Its subcellular location is the cytoplasm. It carries out the reaction A + NH4(+) + H2O = hydroxylamine + AH2 + H(+). In terms of biological role, catalyzes the reduction of hydroxylamine to form NH(3) and H(2)O. The polypeptide is Hydroxylamine reductase (Shewanella sediminis (strain HAW-EB3)).